A 134-amino-acid chain; its full sequence is ATP synthase epsilon chain (134 aa).

This sequence belongs to the ATPase epsilon chain family. F-type ATPases have 2 components, CF(1) - the catalytic core - and CF(0) - the membrane proton channel. CF(1) has five subunits: alpha(3), beta(3), gamma(1), delta(1), epsilon(1). CF(0) has three main subunits: a, b and c.

The protein resides in the cell membrane. In terms of biological role, produces ATP from ADP in the presence of a proton gradient across the membrane. In Pelotomaculum thermopropionicum (strain DSM 13744 / JCM 10971 / SI), this protein is ATP synthase epsilon chain.